A 563-amino-acid chain; its full sequence is F-box/kelch-repeat protein At5g42360 (563 aa).

Positions 129-175 (YRKHVYLPDDILEMCLMRLPLTSLLNAHLVCKKWQSMANTQRFLQMR) constitute an F-box domain. Kelch repeat units follow at residues 184–231 (WLFL…SIHE), 232–282 (EIYI…ATEV), and 355–402 (VLIA…IICN).

The polypeptide is F-box/kelch-repeat protein At5g42360 (Arabidopsis thaliana (Mouse-ear cress)).